Consider the following 128-residue polypeptide: Kinetoplast-associated protein 4 (128 aa).

The propeptide occupies 1-10; that stretch reads MLRFVPRRLA. Residues 60-87 form a disordered region; that stretch reads AHPGFKRKEKEPKELKAAKAAKTSTPRA. Over residues 65–76 the composition is skewed to basic and acidic residues; it reads KRKEKEPKELKA.

It belongs to the KAP family. In terms of assembly, associates with the kinetoplast DNA network.

The protein localises to the mitochondrion matrix. Its subcellular location is the kinetoplast. Functionally, histone H1-like DNA-binding protein involved in the organization and segregation of kinetoplast DNA (kDNA). The mitochondrial DNA of kinetoplastid protozoa consists of about 5,000 minicircles and 20 to 30 maxicircles. These circular DNAs are held together by catenation into a highly organized compact disk structure referred to as a kinetoplast DNA (kDNA) network. Binds preferentially to a specific fragment of minicircle DNA and is able to compact kDNA networks through DNA charge neutralization and condensation. The chain is Kinetoplast-associated protein 4 (KAP4) from Crithidia fasciculata.